The primary structure comprises 626 residues: Ankyrin repeat domain-containing protein 13B (626 aa).

Methionine 1 is subject to N-acetylmethionine. 2 ANK repeats span residues 47 to 76 and 80 to 109; these read RGRT…DVGR and SGWT…YQRV. Residues 442–474 are disordered; it reads PVPSVRGSPSSETPSPGSDSSSVSSSSSTTSCR. Positions 449-472 are enriched in low complexity; that stretch reads SPSSETPSPGSDSSSVSSSSSTTS. One can recognise a UIM 1 domain in the interval 503-522; sequence DDDDLLQFAIQQSLLEAGSE. Disordered stretches follow at residues 534 to 590 and 595 to 614; these read NSKP…DEQL and ELSA…EEEE. Positions 554 to 573 are enriched in pro residues; it reads PPTPQRQPAPPASVPSPRPS. UIM domains follow at residues 585–604 and 610–626; these read SYDE…QEER and QEEE…LTEQ.

Interacts with EGFR (ubiquitinated); the interaction is direct and may regulate EGFR internalization.

The protein localises to the cell membrane. It localises to the late endosome. It is found in the early endosome. Functionally, ubiquitin-binding protein that specifically recognizes and binds 'Lys-63'-linked ubiquitin. Does not bind 'Lys-48'-linked ubiquitin. Positively regulates the internalization of ligand-activated EGFR by binding to the Ub moiety of ubiquitinated EGFR at the cell membrane. This Homo sapiens (Human) protein is Ankyrin repeat domain-containing protein 13B (ANKRD13B).